The primary structure comprises 307 residues: Nodulation protein NoeC (307 aa).

8 helical membrane passes run 46–66, 91–111, 117–137, 140–160, 163–183, 212–232, 238–258, and 279–299; these read APLWLAFMTFCSVASGIYVLN, SGLTGVWMCLVLIALGGVCAI, LFAITASYVALSVIYVGKVRG, VLDLFVLSALYTTRILAGATA, IPVPASFLAFSAMAFVSLASI, IVALICVSAGYAAVVFLELFV, AQGPAPIFVSNAMCVVVAYWI, and VTDGSSLVCILGLALGLVFLM.

Its subcellular location is the cell membrane. This Azorhizobium caulinodans (strain ATCC 43989 / DSM 5975 / JCM 20966 / LMG 6465 / NBRC 14845 / NCIMB 13405 / ORS 571) protein is Nodulation protein NoeC (noeC).